The primary structure comprises 396 residues: MAKEKFERTKPHVNVGTIGHVDHGKTTLTAAIATVLSKAFGGEAKAYDQIDAAPEEKARGITINTAHVEYETANRHYAHVDCPGHADYVKNMITGAAQMDGAILVCSAADGPMPQTREHILLARQVGVPYIVVFLNKCDMVDDAELLELVEMEVRELLSKYDFPGDDTPIIQGSAKLALEGDEGPMGKEAIMKLAEALDTYIPTPERAIDGAFLMPVEDVFSISGRGTVVTGRIERGIVKVGEEIEIIGIKPTLKTTCTGVEMFRKLLDQGQAGDNVGILLRGTKREEVERGQVLAKPGSITPHTHFTAEVYILGKDEGGRHTPFFNNYRPQFYFRTTDVTGSIELPKDKEMVMPGDNVTITVKLIAPIAMEEGLRFAIREGGRTVGAGVVAKILA.

One can recognise a tr-type G domain in the interval 10-206 (KPHVNVGTIG…ALDTYIPTPE (197 aa)). Positions 19-26 (GHVDHGKT) are G1. Residue 19–26 (GHVDHGKT) participates in GTP binding. Mg(2+) is bound at residue threonine 26. A G2 region spans residues 60 to 64 (GITIN). Residues 81 to 84 (DCPG) are G3. Residues 81-85 (DCPGH) and 136-139 (NKCD) each bind GTP. Residues 136–139 (NKCD) form a G4 region. Residues 174 to 176 (SAK) form a G5 region.

It belongs to the TRAFAC class translation factor GTPase superfamily. Classic translation factor GTPase family. EF-Tu/EF-1A subfamily. Monomer.

The protein resides in the cytoplasm. The catalysed reaction is GTP + H2O = GDP + phosphate + H(+). In terms of biological role, GTP hydrolase that promotes the GTP-dependent binding of aminoacyl-tRNA to the A-site of ribosomes during protein biosynthesis. The polypeptide is Elongation factor Tu (Polynucleobacter asymbioticus (strain DSM 18221 / CIP 109841 / QLW-P1DMWA-1) (Polynucleobacter necessarius subsp. asymbioticus)).